Reading from the N-terminus, the 905-residue chain is Toll-like receptor 3 (905 aa).

Positions 1–25 are cleaved as a signal peptide; it reads MKGCSSYLMYSFGGLLSLWILLVSS. The region spanning 26–52 is the LRRNT domain; it reads TNQCTVRYNVADCSHLKLTHIPDDLPS. At 26-705 the chain is on the lumenal side; that stretch reads TNQCTVRYNV…SCKDSAPFEL (680 aa). An intrachain disulfide couples Cys-29 to Cys-38. N-linked (GlcNAc...) asparagine glycosylation is found at Asn-53, Asn-58, and Asn-71. LRR repeat units follow at residues 53 to 74, 77 to 98, 101 to 122, 125 to 146, 149 to 170, and 173 to 196; these read NITVLNLTHNQLRRLPPTNFTR, QLAILDAGFNSISKLEPELCQI, LLKVLNLQHNELSQISDQTFVF, NLTELDLMSNSIHKIKSNPFKN, NLIKLDLSHNGLSSTKLGTGVQ, and NLQELLLAKNKILALRSEELEFLG. Cysteines 96 and 123 form a disulfide. Asn-125 carries an N-linked (GlcNAc...) asparagine glycan. An N-linked (GlcNAc...) asparagine glycan is attached at Asn-197. One copy of the LRR 7 repeat lies at 199-220; that stretch reads SLRKLDLSSNPLKEFSPGCFQT. Asn-248, Asn-253, Asn-276, and Asn-292 each carry an N-linked (GlcNAc...) asparagine glycan. LRR repeat units lie at residues 250-271, 276-297, 300-321, 324-345, 357-378, 381-401, 409-430, 433-454, 458-479, 482-502, 508-529, 532-553, 564-585, 588-609, and 612-633; these read SIQNLSLANNQLLATSESTFSG, NLTQLDLSYNNLHDVGNGSFSY, SLRYLSLEYNNIQRLSPRSFYG, NLRYLSLKRAFTKQSVSLASHP, YLEYLNMDDNNIPSTKSNTFTG, SLKYLSLSKTFTSLQTLTNET, PLLTLNLTKNHISKIANGTFSW, QLRILDLGLNEIEQKLSGQEWR, NIFEIYLSYNKYLQLSTSSFAL, SLQRLMLRRVALKNVDISPSP, NLTILDLSNNNIANINEDLLEG, NLEILDFQHNNLARLWKRANPG, HLHILNLESNGLDEIPVGVFKN, ELKSINLGLNNLNKLEPFIFDD, and SLRSLNLQKNLITSVEKDVFGP. 3 N-linked (GlcNAc...) asparagine glycosylation sites follow: Asn-399, Asn-414, and Asn-425. The N-linked (GlcNAc...) asparagine glycan is linked to Asn-508. An LRRCT domain is found at 646-699; the sequence is NPFDCTCESISWFVNWINQTHTNISELSTHYLCNTPHHYYGFPLKLFDTSSCKD. 2 disulfides stabilise this stretch: Cys-650–Cys-678 and Cys-652–Cys-697. 2 N-linked (GlcNAc...) asparagine glycosylation sites follow: Asn-663 and Asn-668. Residues 706–726 traverse the membrane as a helical segment; that stretch reads LFIISTSMLLVFILVVLLIHI. Over 727–905 the chain is Cytoplasmic; sequence EGWRISFYWN…VALGSRNSAH (179 aa). A TIR domain is found at 755-898; it reads FEYTAYIIHA…AFHHKLQVAL (144 aa). Tyr-760 bears the Phosphotyrosine mark. Glycyl lysine isopeptide (Lys-Gly) (interchain with G-Cter in ubiquitin) cross-links involve residues Lys-766, Lys-813, and Lys-832. Tyr-859 carries the phosphotyrosine modification.

It belongs to the Toll-like receptor family. Monomer and homodimer; dimerization is triggered by ligand-binding, the signaling unit is composed of one ds-RNA of around 40 bp and two TLR3 molecules, and lateral clustering of signaling units along the length of the ds-RNA ligand is required for TLR3 signal transduction. Interacts (via transmembrane domain) with UNC93B1; the interaction is required for transport from the ER to the endosomes. Interacts with SRC; upon binding of double-stranded RNA. Interacts with TICAM1 (via the TIR domain) in response to poly(I:C) and this interaction is enhanced in the presence of WDFY1. The tyrosine-phosphorylated form (via TIR domain) interacts with WDFY1 (via WD repeat 2) in response to poly(I:C). Ubiquitinated by RNF170 at Lys-766 via 'Lys-48'-linked ubiquitin chains; leading to TLR3 proteasomal degradation. Post-translationally, TLR3 signaling requires a proteolytic cleavage mediated by cathepsins CTSB and CTSH, the cleavage occurs between amino acids 252 and 346. The cleaved form of TLR3 is the predominant form found in endosomes. In terms of processing, ubiquitinated by TRIM3; leading to recognition and sorting of polyubiquitinated TLR3 by the ESCRT complexes. Ubiquitinated by ZNRF1 via 'Lys-63'-linked ubiquitin chains; leading to TLR3 lysosomal trafficking and degradation. As to expression, highly expressed in lung. After intraperitoneal injection of lipopolysaccharide, highly expressed in brain, heart, kidney, liver, lung and spleen.

It localises to the endoplasmic reticulum membrane. Its subcellular location is the endosome membrane. The protein localises to the early endosome. Its function is as follows. Key component of innate and adaptive immunity. TLRs (Toll-like receptors) control host immune response against pathogens through recognition of molecular patterns specific to microorganisms. TLR3 is a nucleotide-sensing TLR which is activated by double-stranded RNA, a sign of viral infection. Acts via the adapter TRIF/TICAM1, leading to NF-kappa-B activation, IRF3 nuclear translocation, cytokine secretion and the inflammatory response. This chain is Toll-like receptor 3, found in Mus musculus (Mouse).